Consider the following 203-residue polypeptide: uncharacterized protein (203 aa).

This is an uncharacterized protein from Archaeoglobus fulgidus (strain ATCC 49558 / DSM 4304 / JCM 9628 / NBRC 100126 / VC-16).